The sequence spans 116 residues: U3-theraphotoxin-Lsp1a (116 aa).

The N-terminal stretch at methionine 1–alanine 17 is a signal peptide. The propeptide occupies threonine 18–lysine 50.

The protein belongs to the neurotoxin 25 family. F7 subfamily. Contains 3 disulfide bonds. As to expression, expressed by the venom gland.

The protein localises to the secreted. The chain is U3-theraphotoxin-Lsp1a from Lasiodora sp. (strain IBSP 8539) (Brazilian salmon pink birdeater).